The chain runs to 230 residues: 3-beta-hydroxysteroid-Delta(8),Delta(7)-isomerase (230 aa).

At threonine 2 the chain carries N-acetylthreonine. A run of 4 helical transmembrane segments spans residues serine 29–leucine 49, leucine 66–tyrosine 86, methionine 121–leucine 141, and phenylalanine 185–leucine 205. The EXPERA domain occupies glycine 61–valine 204.

It belongs to the EBP family.

The protein localises to the endoplasmic reticulum membrane. The protein resides in the nucleus envelope. It is found in the cytoplasmic vesicle. The enzyme catalyses lathosterol = 5alpha-cholest-8-en-3beta-ol. It carries out the reaction zymosterol = 5alpha-cholesta-7,24-dien-3beta-ol. It catalyses the reaction 5,6alpha-epoxy-5alpha-cholestan-3beta-ol + H2O = 5alpha-cholestane-3beta,5,6beta-triol. The catalysed reaction is 5,6beta-epoxy-5beta-cholestan-3beta-ol + H2O = 5alpha-cholestane-3beta,5,6beta-triol. It functions in the pathway steroid biosynthesis; cholesterol biosynthesis. In terms of biological role, isomerase that catalyzes the conversion of Delta(8)-sterols to their corresponding Delta(7)-isomers. Functionally, component of the microsomal antiestrogen binding site (AEBS), a multiproteic complex at the ER membrane that consists of an association between EBP and 7-dehydrocholesterol reductase/DHCR7. This complex is responsible for cholesterol-5,6-epoxide hydrolase (ChEH) activity, which consists in the hydration of cholesterol-5,6-epoxides (5,6-EC) into cholestane-3beta,5alpha,6beta-triol (CT). The precise role of each component of this complex has not been described yet. The protein is 3-beta-hydroxysteroid-Delta(8),Delta(7)-isomerase of Mus musculus (Mouse).